Reading from the N-terminus, the 104-residue chain is Glutaredoxin (104 aa).

The Glutaredoxin domain maps to 3–103; it reads MIKAQELVSS…PLLTEAGAVK (101 aa). C23 and C26 are oxidised to a cystine.

Belongs to the glutaredoxin family. CPYC subfamily.

It localises to the cytoplasm. Functionally, has a glutathione-disulfide oxidoreductase activity in the presence of NADPH and glutathione reductase. Reduces low molecular weight disulfides and proteins. The chain is Glutaredoxin from Vernicia fordii (Tung).